We begin with the raw amino-acid sequence, 412 residues long: Putative pectate lyase 11 (412 aa).

Positions 1–24 (MVSYSNNHFAYAFLLLLTIGNTLA) are cleaved as a signal peptide. Asp210, Asp234, and Asp238 together coordinate Ca(2+). The active site involves Arg290.

The protein belongs to the polysaccharide lyase 1 family. It depends on Ca(2+) as a cofactor.

The enzyme catalyses Eliminative cleavage of (1-&gt;4)-alpha-D-galacturonan to give oligosaccharides with 4-deoxy-alpha-D-galact-4-enuronosyl groups at their non-reducing ends.. The protein operates within glycan metabolism; pectin degradation; 2-dehydro-3-deoxy-D-gluconate from pectin: step 2/5. This is Putative pectate lyase 11 from Arabidopsis thaliana (Mouse-ear cress).